A 481-amino-acid polypeptide reads, in one-letter code: Fibrinogen beta chain (481 aa).

Residues 1-19 (MRHLWLLLLLCVFSVQTQA) form the signal peptide. The tract at residues 22–81 (DDYDEPTDSLDARGHRPVDRRKEEPPSLRPAPPPISGGGYRARPAKATANQKKVERRPPD) is disordered. The span at 31–47 (LDARGHRPVDRRKEEPP) shows a compositional bias: basic and acidic residues. Residues 35 to 37 (GHR) form a beta-chain polymerization, binding distal domain of another fibrin region. A coiled-coil region spans residues 149-213 (QAQVKENENV…SDISAQMEYC (65 aa)). 2 disulfides stabilise this stretch: cysteine 221/cysteine 306 and cysteine 231/cysteine 260. The Fibrinogen C-terminal domain occupies 222-478 (NIPVVSGKEC…RMSMKIRPFF (257 aa)). Asparagine 384 carries an N-linked (GlcNAc...) asparagine glycan. An intrachain disulfide couples cysteine 414 to cysteine 427.

As to quaternary structure, heterohexamer; disulfide linked. Contains 2 sets of 3 non-identical chains (alpha, beta and gamma). The 2 heterotrimers are in head to head conformation with the N-termini in a small central domain. Conversion of fibrinogen to fibrin is triggered by thrombin, which cleaves fibrinopeptides A and B from alpha and beta chains, and thus exposes the N-terminal polymerization sites responsible for the formation of the soft clot.

Its subcellular location is the secreted. Its function is as follows. Cleaved by the protease thrombin to yield monomers which, together with fibrinogen alpha (FGA) and fibrinogen gamma (FGG), polymerize to form an insoluble fibrin matrix. Fibrin has a major function in hemostasis as one of the primary components of blood clots. In addition, functions during the early stages of wound repair to stabilize the lesion and guide cell migration during re-epithelialization. Was originally thought to be essential for platelet aggregation, based on in vitro studies using anticoagulated blood. However, subsequent studies have shown that it is not absolutely required for thrombus formation in vivo. Enhances expression of SELP in activated platelets via an ITGB3-dependent pathway. Maternal fibrinogen is essential for successful pregnancy. Fibrin deposition is also associated with infection, where it protects against IFNG-mediated hemorrhage. May also facilitate the immune response via both innate and T-cell mediated pathways. The chain is Fibrinogen beta chain (Fgb) from Mus musculus (Mouse).